The primary structure comprises 74 residues: MQMPSTQTSKPPQLSQTPVSAAVVVKALKNSVKAAFLTSSPQAPGTLKPRALVRPSPGPVQENHLSEAQFPPKL.

Positions 39–74 (SSPQAPGTLKPRALVRPSPGPVQENHLSEAQFPPKL) are disordered.

This is an uncharacterized protein from Homo sapiens (Human).